Reading from the N-terminus, the 141-residue chain is uncharacterized protein (141 aa).

This is an uncharacterized protein from Homo sapiens (Human).